Here is a 375-residue protein sequence, read N- to C-terminus: Chaperone protein DnaJ (375 aa).

In terms of domain architecture, J spans 5–69 (DYYEILGVSK…QKRAAYDQYG (65 aa)). The CR-type zinc finger occupies 130-208 (GVTKEIRIPT…CHGHGRVEKA (79 aa)). 8 residues coordinate Zn(2+): Cys143, Cys146, Cys160, Cys163, Cys182, Cys185, Cys196, and Cys199. 4 CXXCXGXG motif repeats span residues 143-150 (CGVCHGSG), 160-167 (CPTCHGQG), 182-189 (CPHCHGRG), and 196-203 (CNSCHGHG).

The protein belongs to the DnaJ family. As to quaternary structure, homodimer. It depends on Zn(2+) as a cofactor.

The protein localises to the cytoplasm. In terms of biological role, participates actively in the response to hyperosmotic and heat shock by preventing the aggregation of stress-denatured proteins and by disaggregating proteins, also in an autonomous, DnaK-independent fashion. Unfolded proteins bind initially to DnaJ; upon interaction with the DnaJ-bound protein, DnaK hydrolyzes its bound ATP, resulting in the formation of a stable complex. GrpE releases ADP from DnaK; ATP binding to DnaK triggers the release of the substrate protein, thus completing the reaction cycle. Several rounds of ATP-dependent interactions between DnaJ, DnaK and GrpE are required for fully efficient folding. Also involved, together with DnaK and GrpE, in the DNA replication of plasmids through activation of initiation proteins. This chain is Chaperone protein DnaJ, found in Serratia proteamaculans (strain 568).